We begin with the raw amino-acid sequence, 937 residues long: Beta-mannosidase A (937 aa).

The first 23 residues, M1–S23, serve as a signal peptide directing secretion. N-linked (GlcNAc...) asparagine glycans are attached at residues N42, N82, N250, N285, N319, N329, and N350. The active-site Proton donor is E482. N-linked (GlcNAc...) asparagine glycosylation is found at N553, N612, N743, and N796.

Belongs to the glycosyl hydrolase 2 family. Beta-mannosidase A subfamily. In terms of assembly, homodimer. Post-translationally, N-glycosylated.

The protein localises to the secreted. The enzyme catalyses Hydrolysis of terminal, non-reducing beta-D-mannose residues in beta-D-mannosides.. The protein operates within glycan metabolism; N-glycan degradation. Its function is as follows. Exoglycosidase that cleaves the single beta-linked mannose residue from the non-reducing end of beta-mannosidic oligosaccharides of various complexity and length. Involved in the degradation of polymeric mannan and galactomannan. Releases the terminal mannose residue from mannotriose and is somewaht less active on other mannooligosaccharides. This is Beta-mannosidase A (mndA) from Aspergillus aculeatus.